The chain runs to 125 residues: Fatty acid-binding protein, liver-type (125 aa).

This sequence belongs to the calycin superfamily. Fatty-acid binding protein (FABP) family.

Its subcellular location is the cytoplasm. The protein is Fatty acid-binding protein, liver-type (fabp1) of Takifugu rubripes (Japanese pufferfish).